The chain runs to 413 residues: uncharacterized protein (413 aa).

The protein belongs to the mimivirus L17x/L18x family.

This is an uncharacterized protein from Acanthamoeba polyphaga (Amoeba).